We begin with the raw amino-acid sequence, 116 residues long: Ribosome-binding factor A (116 aa).

It belongs to the RbfA family. As to quaternary structure, monomer. Binds 30S ribosomal subunits, but not 50S ribosomal subunits or 70S ribosomes.

The protein localises to the cytoplasm. One of several proteins that assist in the late maturation steps of the functional core of the 30S ribosomal subunit. Associates with free 30S ribosomal subunits (but not with 30S subunits that are part of 70S ribosomes or polysomes). Required for efficient processing of 16S rRNA. May interact with the 5'-terminal helix region of 16S rRNA. This is Ribosome-binding factor A from Clostridium botulinum (strain Eklund 17B / Type B).